A 126-amino-acid chain; its full sequence is Small ribosomal subunit protein uS11 (126 aa).

Belongs to the universal ribosomal protein uS11 family. As to quaternary structure, part of the 30S ribosomal subunit. Interacts with proteins S7 and S18. Binds to IF-3.

In terms of biological role, located on the platform of the 30S subunit, it bridges several disparate RNA helices of the 16S rRNA. Forms part of the Shine-Dalgarno cleft in the 70S ribosome. The sequence is that of Small ribosomal subunit protein uS11 from Treponema pallidum (strain Nichols).